The chain runs to 75 residues: Veswaprin-c (75 aa).

The N-terminal stretch at 1-24 is a signal peptide; it reads MSSGGLLLLLGLLTLWAELTPVSS. Residues 27 to 72 enclose the WAP domain; it reads RPKKPGLCPPRPQKPPCVRECKNDWRCPGERKCCRYGCIYECRDPI. Cystine bridges form between Cys-34-Cys-60, Cys-43-Cys-64, Cys-47-Cys-59, and Cys-53-Cys-68.

It belongs to the venom waprin family. In terms of tissue distribution, expressed by the venom gland.

The protein localises to the secreted. Damages membranes of susceptible bacteria. Has no hemolytic activity. Not toxic to mice. Does not inhibit the proteinases elastase and cathepsin G. The chain is Veswaprin-c from Demansia vestigiata (Lesser black whip snake).